A 761-amino-acid polypeptide reads, in one-letter code: uncharacterized protein (761 aa).

The CR-type zinc-finger motif lies at 1 to 84 (MIVKCPICDG…CGGSGKVVKC (84 aa)). The region spanning 135–200 (GKFYKGVVTR…EKREIDFKYI (66 aa)) is the S1 motif domain.

This is an uncharacterized protein from Methanocaldococcus jannaschii (strain ATCC 43067 / DSM 2661 / JAL-1 / JCM 10045 / NBRC 100440) (Methanococcus jannaschii).